A 450-amino-acid polypeptide reads, in one-letter code: Glucose-6-phosphate isomerase (450 aa).

Position 39 is a phosphothreonine (T39). The active-site Proton donor is E291. Active-site residues include H312 and K426.

This sequence belongs to the GPI family.

The protein resides in the cytoplasm. It catalyses the reaction alpha-D-glucose 6-phosphate = beta-D-fructose 6-phosphate. It participates in carbohydrate biosynthesis; gluconeogenesis. The protein operates within carbohydrate degradation; glycolysis; D-glyceraldehyde 3-phosphate and glycerone phosphate from D-glucose: step 2/4. In terms of biological role, catalyzes the reversible isomerization of glucose-6-phosphate to fructose-6-phosphate. In Bacillus cereus (strain ATCC 10987 / NRS 248), this protein is Glucose-6-phosphate isomerase.